The primary structure comprises 464 residues: ATP synthase subunit beta (464 aa).

An ATP-binding site is contributed by 148-155; it reads GGAGVGKT.

Belongs to the ATPase alpha/beta chains family. As to quaternary structure, F-type ATPases have 2 components, CF(1) - the catalytic core - and CF(0) - the membrane proton channel. CF(1) has five subunits: alpha(3), beta(3), gamma(1), delta(1), epsilon(1). CF(0) has three main subunits: a(1), b(2) and c(9-12). The alpha and beta chains form an alternating ring which encloses part of the gamma chain. CF(1) is attached to CF(0) by a central stalk formed by the gamma and epsilon chains, while a peripheral stalk is formed by the delta and b chains.

The protein resides in the cell inner membrane. The catalysed reaction is ATP + H2O + 4 H(+)(in) = ADP + phosphate + 5 H(+)(out). Functionally, produces ATP from ADP in the presence of a proton gradient across the membrane. The catalytic sites are hosted primarily by the beta subunits. The protein is ATP synthase subunit beta of Acinetobacter baylyi (strain ATCC 33305 / BD413 / ADP1).